Consider the following 342-residue polypeptide: S-adenosylmethionine:tRNA ribosyltransferase-isomerase (342 aa).

The protein belongs to the QueA family. In terms of assembly, monomer.

The protein localises to the cytoplasm. The enzyme catalyses 7-aminomethyl-7-carbaguanosine(34) in tRNA + S-adenosyl-L-methionine = epoxyqueuosine(34) in tRNA + adenine + L-methionine + 2 H(+). It participates in tRNA modification; tRNA-queuosine biosynthesis. Functionally, transfers and isomerizes the ribose moiety from AdoMet to the 7-aminomethyl group of 7-deazaguanine (preQ1-tRNA) to give epoxyqueuosine (oQ-tRNA). This Streptococcus pneumoniae (strain ATCC BAA-255 / R6) protein is S-adenosylmethionine:tRNA ribosyltransferase-isomerase.